We begin with the raw amino-acid sequence, 328 residues long: Telomere-binding protein cav (328 aa).

The required for binding to Su(var)205 stretch occupies residues 107–320 (RRKMVQPYPE…NISLQNSGSE (214 aa)). The disordered stretch occupies residues 139 to 228 (DRWQKQKSQN…EFQTEHTDCP (90 aa)). Polar residues-rich tracts occupy residues 144–167 (QKSQ…QQDS) and 180–189 (ANTNRYSVSQ). Short sequence motifs (su(var)205-binding Pro-containing repeat) lie at residues 228 to 232 (PETQM) and 281 to 287 (PETETNE). Over residues 295–319 (INSESMSIGPSIDSEGNISLQNSGS) the composition is skewed to polar residues. The disordered stretch occupies residues 295–328 (INSESMSIGPSIDSEGNISLQNSGSEPIDVDSMA).

Interacts (via C-terminus) with Su(var)205 dimer (via hinge and chromoshadow domain) and with moi to form the terminin, telomere-capping, complex. Interacts with HP6, which is also part of the terminin complex.

Its subcellular location is the nucleus. The protein resides in the chromosome. It localises to the telomere. Binds to chromosome ends in a sequence-dependent manner and is required for telomere capping. The sequence is that of Telomere-binding protein cav from Drosophila erecta (Fruit fly).